The chain runs to 54 residues: Small, acid-soluble spore protein gamma-type (54 aa).

A disordered region spans residues 1-54 (MAKKNRNKQQQEMQQQQQQHQAEFANEFAEGSSAEQARQQQQKAAGKRQKKNQQ). 2 stretches are compositionally biased toward low complexity: residues 10–21 (QQEMQQQQQQHQ) and 29–44 (AEGS…QQKA). Positions 45–54 (AGKRQKKNQQ) are enriched in basic residues.

The protein belongs to the gamma-type SASP family.

Its function is as follows. SASP are proteins degraded in the first minutes of spore germination and provide amino acids for both new protein synthesis and metabolism. These proteins may be involved in dormant spore's high resistance to UV light. The polypeptide is Small, acid-soluble spore protein gamma-type (sspA) (Alkalihalophilus pseudofirmus (strain ATCC BAA-2126 / JCM 17055 / OF4) (Bacillus pseudofirmus)).